Here is a 104-residue protein sequence, read N- to C-terminus: MQKIRRDDEIIVIAGKDKGKRGKVLKVLADDRLVVGGLNLVKRHTKPNPMSGVQGGIVEKEAPLHASNVAIFNSETNKADRVGFKVEDGKKIRVFKSTQKAVDA.

Belongs to the universal ribosomal protein uL24 family. As to quaternary structure, part of the 50S ribosomal subunit.

One of two assembly initiator proteins, it binds directly to the 5'-end of the 23S rRNA, where it nucleates assembly of the 50S subunit. Functionally, one of the proteins that surrounds the polypeptide exit tunnel on the outside of the subunit. The protein is Large ribosomal subunit protein uL24 of Pseudomonas fluorescens (strain ATCC BAA-477 / NRRL B-23932 / Pf-5).